The following is a 144-amino-acid chain: Eukaryotic translation initiation factor 1A, X-chromosomal (144 aa).

A compositionally biased stretch (basic residues) spans 1–15 (MPKNKGKGGKNRRRG). 2 disordered regions span residues 1-26 (MPKN…KREL) and 114-144 (KINE…IDDI). Basic and acidic residues predominate over residues 16-26 (KNENESEKREL). Residues 22–96 (EKRELVFKED…NKADVILKYN (75 aa)) form the S1-like domain. The segment covering 124-144 (GDDDEIQFDDIGDDDEDIDDI) has biased composition (acidic residues).

The protein belongs to the eIF-1A family. Component of the 43S pre-initiation complex (43S PIC), which is composed of the 40S ribosomal subunit, EIF1, eIF1A (EIF1AX), eIF3 complex, EIF5 and eIF2-GTP-initiator tRNA complex (eIF2 ternary complex). Interacts with EIF5; this interaction contributes to the maintenance of EIF1 within the open 43S PIC. Interacts through its C-terminal domain (CTD) with the CTD of EIF5B; from the location of the start codon by the 43S complex until the formation of the 80S complex. As to quaternary structure, (Microbial infection) Interacts with human respiratory syncytial virus (HRSV) nucleoprotein; this interaction recruits EIF1AX to the viral replication complex to facilitate viral genomic RNA synthesis and virus production.

It is found in the cytoplasm. Functionally, component of the 43S pre-initiation complex (43S PIC), which binds to the mRNA cap-proximal region, scans mRNA 5'-untranslated region, and locates the initiation codon. This protein enhances formation of the cap-proximal complex. Together with EIF1, facilitates scanning, start codon recognition, promotion of the assembly of 48S complex at the initiation codon (43S PIC becomes 48S PIC after the start codon is reached), and dissociation of aberrant complexes. After start codon location, together with EIF5B orients the initiator methionine-tRNA in a conformation that allows 60S ribosomal subunit joining to form the 80S initiation complex. Is released after 80S initiation complex formation, just after GTP hydrolysis by EIF5B, and before release of EIF5B. Its globular part is located in the A site of the 40S ribosomal subunit. Its interaction with EIF5 during scanning contribute to the maintenance of EIF1 within the open 43S PIC. In contrast to yeast orthologs, does not bind EIF1. In Homo sapiens (Human), this protein is Eukaryotic translation initiation factor 1A, X-chromosomal (EIF1AX).